The primary structure comprises 201 residues: MTERTGKFAGDNPFTIAESWLAEAQESEVNDPNAIALSTVDADGMPNARMVLLKGVEPDAFVFYTNYESAKARELDGAGKAAFVMHWKSLRRQIRVRGHVSREDGDAADAYFASRSLKSRLGAWASKQSRPLSSRAALMAEVAKMTATHGTNPKRPPFWGGFRITPVEIEFWADGDFRLHDRFVWRRETPQSEWHVTRLNP.

FMN-binding positions include arginine 49–lysine 54, tyrosine 64–threonine 65, lysine 71, and glutamine 93. Lysine 54 is a binding site for substrate. The substrate site is built by tyrosine 111, arginine 115, and serine 119. FMN contacts are provided by residues glutamine 128–serine 129 and tryptophan 172. Substrate is bound at residue arginine 178 to histidine 180. Residue arginine 182 participates in FMN binding.

The protein belongs to the pyridoxamine 5'-phosphate oxidase family. Homodimer. The cofactor is FMN.

The enzyme catalyses pyridoxamine 5'-phosphate + O2 + H2O = pyridoxal 5'-phosphate + H2O2 + NH4(+). It catalyses the reaction pyridoxine 5'-phosphate + O2 = pyridoxal 5'-phosphate + H2O2. It functions in the pathway cofactor metabolism; pyridoxal 5'-phosphate salvage; pyridoxal 5'-phosphate from pyridoxamine 5'-phosphate: step 1/1. Its pathway is cofactor metabolism; pyridoxal 5'-phosphate salvage; pyridoxal 5'-phosphate from pyridoxine 5'-phosphate: step 1/1. Functionally, catalyzes the oxidation of either pyridoxine 5'-phosphate (PNP) or pyridoxamine 5'-phosphate (PMP) into pyridoxal 5'-phosphate (PLP). The sequence is that of Pyridoxine/pyridoxamine 5'-phosphate oxidase from Roseobacter denitrificans (strain ATCC 33942 / OCh 114) (Erythrobacter sp. (strain OCh 114)).